A 73-amino-acid polypeptide reads, in one-letter code: Ubiquitin-like modifier HUB1 (73 aa).

Positions 1–73 constitute a Ubiquitin-like domain; the sequence is MIEVVVNDRL…DQTNLELYYL (73 aa).

Functionally, forms conjugate with SPH1 and HBT1. Involved in morphogenesis. This Saccharomyces cerevisiae (strain ATCC 204508 / S288c) (Baker's yeast) protein is Ubiquitin-like modifier HUB1 (HUB1).